Reading from the N-terminus, the 1036-residue chain is Putative GPI-anchored protein pfl2 (1036 aa).

The N-terminal stretch at 1 to 23 (MKFFTASTLFLLAAQSLNSGVSA) is a signal peptide. 25 N-linked (GlcNAc...) asparagine glycosylation sites follow: N66, N97, N165, N201, N233, N259, N277, N296, N312, N331, N347, N363, N379, N395, N410, N429, N445, N461, N477, N493, N509, N524, N543, N559, and N573. Disordered regions lie at residues 88–130 (SSSL…SSLA) and 147–183 (SSLA…SLSS). Low complexity predominate over residues 243 to 585 (SSISSTVSSS…ITSSASGSTG (343 aa)). The tract at residues 243-710 (SSISSTVSSS…PLSNSTVAPT (468 aa)) is disordered. Residues 586–595 (EFTNTNSGNG) are compositionally biased toward polar residues. Residues 597-630 (VSGSVTTPTSTPLSNSTVAPTSTFTSSGFNTTSG) show a composition bias toward low complexity. N611, N626, N642, N657, N673, N688, N704, N719, and N735 each carry an N-linked (GlcNAc...) asparagine glycan. The span at 631–647 (LPTSSASTPLSNSTVAP) shows a compositional bias: polar residues. Residues 648–692 (TSTFTSSGFNTTSGLPTSSASTPSSNSSIVPTSTFTSSGFNTTSG) show a composition bias toward low complexity. A compositionally biased stretch (polar residues) spans 693–709 (LPTSSASTPLSNSTVAP). 3 stretches are compositionally biased toward low complexity: residues 722-831 (SGLP…TTAS), 838-862 (PTAA…ATYT), and 885-906 (IPVN…SFTP). Disordered stretches follow at residues 722 to 862 (SGLP…ATYT) and 885 to 918 (IPVN…SYSN). N-linked (GlcNAc...) asparagine glycosylation is found at N918, N924, N930, N933, N939, N947, and N977. Residues 978-1011 (TTATSGSDDDVKTASTSSSTSYTSSSSSSSSTTS) form a disordered region. Positions 990–1011 (TASTSSSTSYTSSSSSSSSTTS) are enriched in low complexity. A lipid anchor (GPI-anchor amidated serine) is attached at S1011. Positions 1012–1036 (AASSKASVSMGLNGLMIAAVILLVA) are cleaved as a propeptide — removed in mature form.

The protein resides in the cell membrane. In terms of biological role, may be involved in agglutination during conjugation or other aspects of colony formation. Induces flocculation when overexpressed. This chain is Putative GPI-anchored protein pfl2, found in Schizosaccharomyces pombe (strain 972 / ATCC 24843) (Fission yeast).